The primary structure comprises 287 residues: Phosphatidylserine decarboxylase proenzyme (287 aa).

Residues Asp86, His143, and Ser250 each act as charge relay system; for autoendoproteolytic cleavage activity in the active site. Ser250 serves as the catalytic Schiff-base intermediate with substrate; via pyruvic acid; for decarboxylase activity. Ser250 is modified (pyruvic acid (Ser); by autocatalysis).

It belongs to the phosphatidylserine decarboxylase family. PSD-B subfamily. Prokaryotic type I sub-subfamily. Heterodimer of a large membrane-associated beta subunit and a small pyruvoyl-containing alpha subunit. Pyruvate serves as cofactor. In terms of processing, is synthesized initially as an inactive proenzyme. Formation of the active enzyme involves a self-maturation process in which the active site pyruvoyl group is generated from an internal serine residue via an autocatalytic post-translational modification. Two non-identical subunits are generated from the proenzyme in this reaction, and the pyruvate is formed at the N-terminus of the alpha chain, which is derived from the carboxyl end of the proenzyme. The autoendoproteolytic cleavage occurs by a canonical serine protease mechanism, in which the side chain hydroxyl group of the serine supplies its oxygen atom to form the C-terminus of the beta chain, while the remainder of the serine residue undergoes an oxidative deamination to produce ammonia and the pyruvoyl prosthetic group on the alpha chain. During this reaction, the Ser that is part of the protease active site of the proenzyme becomes the pyruvoyl prosthetic group, which constitutes an essential element of the active site of the mature decarboxylase.

Its subcellular location is the cell membrane. It carries out the reaction a 1,2-diacyl-sn-glycero-3-phospho-L-serine + H(+) = a 1,2-diacyl-sn-glycero-3-phosphoethanolamine + CO2. It functions in the pathway phospholipid metabolism; phosphatidylethanolamine biosynthesis; phosphatidylethanolamine from CDP-diacylglycerol: step 2/2. Its function is as follows. Catalyzes the formation of phosphatidylethanolamine (PtdEtn) from phosphatidylserine (PtdSer). The protein is Phosphatidylserine decarboxylase proenzyme of Wigglesworthia glossinidia brevipalpis.